A 547-amino-acid chain; its full sequence is Chaperonin GroEL 2 (547 aa).

ATP contacts are provided by residues 30-33, Lys51, 87-91, Gly415, 479-481, and Asp495; these read TLGP, DGTTT, and NAA. Residues 528-547 form a disordered region; sequence KPATAGLPHGGPGGFGGPEF. A compositionally biased stretch (gly residues) spans 535 to 547; the sequence is PHGGPGGFGGPEF.

Belongs to the chaperonin (HSP60) family. In terms of assembly, forms a cylinder of 14 subunits composed of two heptameric rings stacked back-to-back. Interacts with the co-chaperonin GroES.

It localises to the cytoplasm. The enzyme catalyses ATP + H2O + a folded polypeptide = ADP + phosphate + an unfolded polypeptide.. Its function is as follows. Together with its co-chaperonin GroES, plays an essential role in assisting protein folding. The GroEL-GroES system forms a nano-cage that allows encapsulation of the non-native substrate proteins and provides a physical environment optimized to promote and accelerate protein folding. The polypeptide is Chaperonin GroEL 2 (Azoarcus sp. (strain BH72)).